The sequence spans 146 residues: DNA utilization protein HofO (146 aa).

The chain crosses the membrane as a helical span at residues W20–H37.

Its subcellular location is the cell inner membrane. Functionally, required for the use of extracellular DNA as a nutrient. The sequence is that of DNA utilization protein HofO (hofO) from Escherichia coli (strain K12).